The following is a 252-amino-acid chain: Phosphate import ATP-binding protein PstB 1 (252 aa).

One can recognise an ABC transporter domain in the interval 6 to 247 (LQVSDLSVYY…PQHKETEDYI (242 aa)). 38-45 (GPSGSGKS) is an ATP binding site.

This sequence belongs to the ABC transporter superfamily. Phosphate importer (TC 3.A.1.7) family. In terms of assembly, the complex is composed of two ATP-binding proteins (PstB), two transmembrane proteins (PstC and PstA) and a solute-binding protein (PstS).

The protein localises to the cell membrane. It catalyses the reaction phosphate(out) + ATP + H2O = ADP + 2 phosphate(in) + H(+). Its function is as follows. Part of the ABC transporter complex PstSACB involved in phosphate import. Responsible for energy coupling to the transport system. In Streptococcus pneumoniae (strain ATCC BAA-255 / R6), this protein is Phosphate import ATP-binding protein PstB 1.